A 1192-amino-acid polypeptide reads, in one-letter code: DNA topoisomerase 2 (1192 aa).

Residues Asn-64, Asn-95, and 142 to 149 (GTNGVGLK) each bind ATP. The Mg(2+) site is built by Glu-438, Asp-539, and Asp-541. Residues 707–1174 (IPNFLDGMTR…PGASVWLEEI (468 aa)) form the Topo IIA-type catalytic domain. Residue Tyr-800 is the O-(5'-phospho-DNA)-tyrosine intermediate of the active site.

The protein belongs to the type II topoisomerase family. Mg(2+) is required as a cofactor. It depends on Mn(2+) as a cofactor. Requires Ca(2+) as cofactor.

It is found in the host cytoplasm. The enzyme catalyses ATP-dependent breakage, passage and rejoining of double-stranded DNA.. Its function is as follows. Type II topoisomerase. Processively relaxes supercoiled DNA. Displays DNA-supercoiling activity only when associated with the viral histone-like protein. The polypeptide is DNA topoisomerase 2 (TOP) (African swine fever virus (strain Badajoz 1971 Vero-adapted) (Ba71V)).